The chain runs to 358 residues: Methionine import ATP-binding protein MetN (358 aa).

Positions 2-247 (ITTTGLTKVY…PGSELAHELF (246 aa)) constitute an ABC transporter domain. Residue 38 to 45 (GQSGAGKS) participates in ATP binding.

It belongs to the ABC transporter superfamily. Methionine importer (TC 3.A.1.24) family. The complex is composed of two ATP-binding proteins (MetN), two transmembrane proteins (MetI) and a solute-binding protein (MetQ).

Its subcellular location is the cell membrane. It carries out the reaction L-methionine(out) + ATP + H2O = L-methionine(in) + ADP + phosphate + H(+). It catalyses the reaction D-methionine(out) + ATP + H2O = D-methionine(in) + ADP + phosphate + H(+). In terms of biological role, part of the ABC transporter complex MetNIQ involved in methionine import. Responsible for energy coupling to the transport system. This chain is Methionine import ATP-binding protein MetN, found in Streptomyces griseus.